Reading from the N-terminus, the 284-residue chain is Tropomyosin Per a 7.0102 (284 aa).

A coiled-coil region spans residues 1-266; the sequence is MDAIKKKMQA…EDELVHEKEK (266 aa).

This sequence belongs to the tropomyosin family. In terms of assembly, homodimer. In terms of tissue distribution, expressed in striated skeletal muscle (at protein level).

Its function is as follows. Tropomyosin, in association with the troponin complex, plays a central role in the calcium dependent regulation of muscle contraction. In Periplaneta americana (American cockroach), this protein is Tropomyosin Per a 7.0102.